Consider the following 92-residue polypeptide: Large ribosomal subunit protein bL27 (92 aa).

The propeptide occupies 1–9 (MIKANLQLF).

It belongs to the bacterial ribosomal protein bL27 family. The N-terminus is cleaved by ribosomal processing cysteine protease Prp.

This chain is Large ribosomal subunit protein bL27, found in Acetivibrio thermocellus (strain ATCC 27405 / DSM 1237 / JCM 9322 / NBRC 103400 / NCIMB 10682 / NRRL B-4536 / VPI 7372) (Clostridium thermocellum).